Consider the following 238-residue polypeptide: 2-phytyl-1,4-naphtoquinone methyltransferase (238 aa).

Belongs to the class I-like SAM-binding methyltransferase superfamily. MenG/UbiE family.

The catalysed reaction is demethylphylloquinol + S-adenosyl-L-methionine = phylloquinol + S-adenosyl-L-homocysteine + H(+). It functions in the pathway cofactor biosynthesis; phylloquinone biosynthesis. Methyltransferase required for the conversion of 2-phytyl-1,4-beta-naphthoquinol to phylloquinol. The sequence is that of 2-phytyl-1,4-naphtoquinone methyltransferase from Synechocystis sp. (strain ATCC 27184 / PCC 6803 / Kazusa).